The following is a 317-amino-acid chain: Apolipoprotein E (317 aa).

A signal peptide spans 1–18 (MKVLWAALLVTFLAGCQA). Repeat copies occupy residues 80–101 (TLMD…EQLS), 102–123 (PVAE…ARLG), 124–145 (ADME…AMLG), 146–167 (QSTE…KRLL), 168–189 (RDAD…EGAE), 190–211 (RGVS…VRAA), 212–233 (TVGS…ERLR), and 234–255 (ARME…EQVA). Residues 80–255 (TLMDETMKEL…RLDEVKEQVA (176 aa)) form an 8 X 22 AA approximate tandem repeats region. Met143 is subject to Methionine sulfoxide. Ser147 carries the post-translational modification Phosphoserine. An LDL and other lipoprotein receptors binding region spans residues 158-168 (HLRKLRKRLLR). 162–165 (LRKR) is a binding site for heparin. The segment at 210-290 (AATVGSLASQ…SWFEPLVEDM (81 aa)) is lipid-binding and lipoprotein association. 229-236 (GERLRARM) contributes to the heparin binding site. Residues 266–317 (QQISLQAEAFQARLKSWFEPLVEDMQRQWAGLVEKVQAAVGASTAPVPSDNH) form a homooligomerization region. Residues 278–290 (RLKSWFEPLVEDM) form a specificity for association with VLDL region.

It belongs to the apolipoprotein A1/A4/E family. As to quaternary structure, homotetramer. May interact with ABCA1; functionally associated with ABCA1 in the biogenesis of HDLs. May interact with APP/A4 amyloid-beta peptide; the interaction is extremely stable in vitro but its physiological significance is unclear. May interact with MAPT. May interact with MAP2. In the cerebrospinal fluid, interacts with secreted SORL1. Interacts with PMEL; this allows the loading of PMEL luminal fragment on ILVs to induce fibril nucleation. APOE exists as multiple glycosylated and sialylated glycoforms within cells and in plasma. The extent of glycosylation and sialylation are tissue and context specific. Post-translationally, glycated in plasma VLDL. In terms of processing, phosphorylated by FAM20C in the extracellular medium.

It localises to the secreted. It is found in the extracellular space. Its subcellular location is the extracellular matrix. The protein resides in the extracellular vesicle. The protein localises to the endosome. It localises to the multivesicular body. In terms of biological role, APOE is an apolipoprotein, a protein associating with lipid particles, that mainly functions in lipoprotein-mediated lipid transport between organs via the plasma and interstitial fluids. APOE is a core component of plasma lipoproteins and is involved in their production, conversion and clearance. Apolipoproteins are amphipathic molecules that interact both with lipids of the lipoprotein particle core and the aqueous environment of the plasma. As such, APOE associates with chylomicrons, chylomicron remnants, very low density lipoproteins (VLDL) and intermediate density lipoproteins (IDL) but shows a preferential binding to high-density lipoproteins (HDL). It also binds a wide range of cellular receptors including the LDL receptor/LDLR, the LDL receptor-related proteins LRP1, LRP2 and LRP8 and the very low-density lipoprotein receptor/VLDLR that mediate the cellular uptake of the APOE-containing lipoprotein particles. Finally, APOE also has a heparin-binding activity and binds heparan-sulfate proteoglycans on the surface of cells, a property that supports the capture and the receptor-mediated uptake of APOE-containing lipoproteins by cells. A main function of APOE is to mediate lipoprotein clearance through the uptake of chylomicrons, VLDLs, and HDLs by hepatocytes. APOE is also involved in the biosynthesis by the liver of VLDLs as well as their uptake by peripheral tissues ensuring the delivery of triglycerides and energy storage in muscle, heart and adipose tissues. By participating in the lipoprotein-mediated distribution of lipids among tissues, APOE plays a critical role in plasma and tissues lipid homeostasis. APOE is also involved in two steps of reverse cholesterol transport, the HDLs-mediated transport of cholesterol from peripheral tissues to the liver, and thereby plays an important role in cholesterol homeostasis. First, it is functionally associated with ABCA1 in the biogenesis of HDLs in tissues. Second, it is enriched in circulating HDLs and mediates their uptake by hepatocytes. APOE also plays an important role in lipid transport in the central nervous system, regulating neuron survival and sprouting. The sequence is that of Apolipoprotein E (APOE) from Papio anubis (Olive baboon).